The chain runs to 362 residues: Peptide chain release factor 1 (362 aa).

N5-methylglutamine is present on Gln-236.

It belongs to the prokaryotic/mitochondrial release factor family. Post-translationally, methylated by PrmC. Methylation increases the termination efficiency of RF1.

The protein resides in the cytoplasm. Peptide chain release factor 1 directs the termination of translation in response to the peptide chain termination codons UAG and UAA. In Lactobacillus gasseri (strain ATCC 33323 / DSM 20243 / BCRC 14619 / CIP 102991 / JCM 1131 / KCTC 3163 / NCIMB 11718 / NCTC 13722 / AM63), this protein is Peptide chain release factor 1.